The sequence spans 36 residues: Egg-laying-like hormone (36 aa).

Position 36 is a lysine amide (Lys-36).

In terms of tissue distribution, supra, subesophageal ganglia and segmental ganglia of the ventral nerve cord and brain.

Functionally, may be involved in leech reproduction. The sequence is that of Egg-laying-like hormone from Theromyzon tessulatum (Duck leech).